Consider the following 1295-residue polypeptide: Phosphoribosylformylglycinamidine synthase (1295 aa).

The tract at residues 305–327 (WPGAATGSGGEIRDEGATGRGAK) is disordered. ATP-binding positions include 307–318 (GAATGSGGEIRD), 386–388 (TGY), and alanine 678. Positions 679, 718, 722, and 884 each coordinate Mg(2+). Serine 886 lines the ATP pocket. The Glutamine amidotransferase type-1 domain occupies 1042–1295 (VAVLREQGVN…IFRNARKQLG (254 aa)). Cysteine 1135 acts as the Nucleophile in catalysis. Residues histidine 1260 and glutamate 1262 contribute to the active site.

The protein in the N-terminal section; belongs to the FGAMS family. Monomer.

The protein resides in the cytoplasm. It carries out the reaction N(2)-formyl-N(1)-(5-phospho-beta-D-ribosyl)glycinamide + L-glutamine + ATP + H2O = 2-formamido-N(1)-(5-O-phospho-beta-D-ribosyl)acetamidine + L-glutamate + ADP + phosphate + H(+). It functions in the pathway purine metabolism; IMP biosynthesis via de novo pathway; 5-amino-1-(5-phospho-D-ribosyl)imidazole from N(2)-formyl-N(1)-(5-phospho-D-ribosyl)glycinamide: step 1/2. Functionally, phosphoribosylformylglycinamidine synthase involved in the purines biosynthetic pathway. Catalyzes the ATP-dependent conversion of formylglycinamide ribonucleotide (FGAR) and glutamine to yield formylglycinamidine ribonucleotide (FGAM) and glutamate. The protein is Phosphoribosylformylglycinamidine synthase of Salmonella paratyphi A (strain ATCC 9150 / SARB42).